Here is a 247-residue protein sequence, read N- to C-terminus: Proteasome subunit alpha type-7-1 (247 aa).

The protein belongs to the peptidase T1A family. In terms of assembly, the 26S proteasome consists of a 20S proteasome core and two 19S regulatory subunits. The 20S proteasome core is composed of 28 subunits that are arranged in four stacked rings, resulting in a barrel-shaped structure. The two end rings are each formed by seven alpha subunits, and the two central rings are each formed by seven beta subunits. The catalytic chamber with the active sites is on the inside of the barrel.

The protein localises to the cytoplasm. It localises to the nucleus. The proteasome is a multicatalytic proteinase complex which is characterized by its ability to cleave peptides with Arg, Phe, Tyr, Leu, and Glu adjacent to the leaving group at neutral or slightly basic pH. The proteasome has an ATP-dependent proteolytic activity. In Drosophila virilis (Fruit fly), this protein is Proteasome subunit alpha type-7-1 (Pros28.1).